We begin with the raw amino-acid sequence, 246 residues long: Cold-regulated protein 27 (246 aa).

Disordered stretches follow at residues 1 to 39 (MVGD…MYSA) and 151 to 232 (EPEN…VVPL). The segment covering 168-180 (SSGSASSLKQLSS) has biased composition (low complexity).

Its subcellular location is the nucleus. Together with COR28, involved in central circadian clock regulation and in flowering promotion, by binding to the chromatin of clock-associated evening genes TOC1, PRR5, ELF4 and cold-responsive genes in order to repress their transcription. Negative regulator of freezing tolerance. The polypeptide is Cold-regulated protein 27 (Arabidopsis thaliana (Mouse-ear cress)).